A 149-amino-acid chain; its full sequence is UPF0336 protein Lxx02810 (149 aa).

The protein belongs to the UPF0336 family.

The protein is UPF0336 protein Lxx02810 of Leifsonia xyli subsp. xyli (strain CTCB07).